A 240-amino-acid polypeptide reads, in one-letter code: Ditrans,polycis-undecaprenyl-diphosphate synthase ((2E,6E)-farnesyl-diphosphate specific) (240 aa).

The active site involves Asp18. Asp18 lines the Mg(2+) pocket. Residues 19-22 (GNGR), Trp23, Arg31, His35, and 63-65 (SSE) each bind substrate. The active-site Proton acceptor is Asn66. Substrate is bound by residues Trp67, Arg69, Arg186, and 192–194 (RIS). Glu205 is a Mg(2+) binding site.

Belongs to the UPP synthase family. In terms of assembly, homodimer. Requires Mg(2+) as cofactor.

The catalysed reaction is 8 isopentenyl diphosphate + (2E,6E)-farnesyl diphosphate = di-trans,octa-cis-undecaprenyl diphosphate + 8 diphosphate. Functionally, catalyzes the sequential condensation of isopentenyl diphosphate (IPP) with (2E,6E)-farnesyl diphosphate (E,E-FPP) to yield (2Z,6Z,10Z,14Z,18Z,22Z,26Z,30Z,34E,38E)-undecaprenyl diphosphate (di-trans,octa-cis-UPP). UPP is the precursor of glycosyl carrier lipid in the biosynthesis of bacterial cell wall polysaccharide components such as peptidoglycan and lipopolysaccharide. This Pasteurella multocida (strain Pm70) protein is Ditrans,polycis-undecaprenyl-diphosphate synthase ((2E,6E)-farnesyl-diphosphate specific).